A 921-amino-acid polypeptide reads, in one-letter code: Protein translocase subunit SecA (921 aa).

ATP-binding positions include glutamine 87, 105–109, and aspartate 501; that span reads GEGKT. A disordered region spans residues 831-886; it reads PFPVINTETSGPSEEPAGLFSQGTTGGDIPAPQPMAGFPSAAPMPPRPQPVPTGAE. The span at 872 to 881 shows a compositional bias: pro residues; it reads APMPPRPQPV. Zn(2+) is bound by residues cysteine 905, cysteine 907, cysteine 916, and histidine 917.

The protein belongs to the SecA family. In terms of assembly, monomer and homodimer. Part of the essential Sec protein translocation apparatus which comprises SecA, SecYEG and auxiliary proteins SecDF-YajC and YidC. Zn(2+) is required as a cofactor.

Its subcellular location is the cell inner membrane. It localises to the cytoplasm. The enzyme catalyses ATP + H2O + cellular proteinSide 1 = ADP + phosphate + cellular proteinSide 2.. Functionally, part of the Sec protein translocase complex. Interacts with the SecYEG preprotein conducting channel. Has a central role in coupling the hydrolysis of ATP to the transfer of proteins into and across the cell membrane, serving both as a receptor for the preprotein-SecB complex and as an ATP-driven molecular motor driving the stepwise translocation of polypeptide chains across the membrane. The polypeptide is Protein translocase subunit SecA (Gluconobacter oxydans (strain 621H) (Gluconobacter suboxydans)).